Reading from the N-terminus, the 305-residue chain is MILITLEHILTQIYFSFILVITLVFGGTLVYPVNKLSNSVKKGIIFPFFCITLNLIIRWFYSRHLPLSNLYESLMFFSWNFCLIPFFIDIKNPNTQWIGVITAPSALFTHAFATLILPIEMQQSQRLIPALQSHWLIMHVTIIFLGYVTLLCGSLSSIALLAINLEKKLSFFTLYFRKEYSYENKRKAFHPYSFKNFRKSQMIHQIDNLSYYTIVIGFTFLTIGILSGAVWANEAWGSYWSWDPKEIWALITWLIFANYIHIRLNKGWEGNKPALVASLGLFFVWICYFGVNILGIGFHSYGWFL.

8 helical membrane-spanning segments follow: residues 13–33 (IYFS…VYPV), 42–62 (KGII…WFYS), 70–90 (LYES…FIDI), 97–117 (WIGV…TLIL), 135–155 (WLIM…CGSL), 212–232 (YTIV…AVWA), 242–262 (WDPK…YIHI), and 276–296 (VASL…ILGI).

The protein belongs to the CcmF/CycK/Ccl1/NrfE/CcsA family. As to quaternary structure, may interact with Ccs1.

It localises to the plastid. The protein resides in the chloroplast thylakoid membrane. Required during biogenesis of c-type cytochromes (cytochrome c6 and cytochrome f) at the step of heme attachment. This Welwitschia mirabilis (Tree tumbo) protein is Cytochrome c biogenesis protein CcsA.